The following is a 545-amino-acid chain: Periplasmic trehalase (545 aa).

Residues 1-30 form the signal peptide; sequence MPDRTALPRAMLAAWVLLLLAACSQGPAPT. Residues arginine 160, 167-168, asparagine 204, 213-215, 285-287, and glycine 318 each bind substrate; these read WD, RSQ, and RQE. Catalysis depends on proton donor/acceptor residues aspartate 320 and glutamate 503. Residue glutamate 518 participates in substrate binding.

Belongs to the glycosyl hydrolase 37 family.

It localises to the periplasm. It catalyses the reaction alpha,alpha-trehalose + H2O = alpha-D-glucose + beta-D-glucose. In terms of biological role, provides the cells with the ability to utilize trehalose at high osmolarity by splitting it into glucose molecules that can subsequently be taken up by the phosphotransferase-mediated uptake system. The chain is Periplasmic trehalase from Pseudomonas aeruginosa (strain ATCC 15692 / DSM 22644 / CIP 104116 / JCM 14847 / LMG 12228 / 1C / PRS 101 / PAO1).